The chain runs to 268 residues: 3-deoxy-manno-octulosonate cytidylyltransferase (268 aa).

This sequence belongs to the KdsB family.

The protein localises to the cytoplasm. The catalysed reaction is 3-deoxy-alpha-D-manno-oct-2-ulosonate + CTP = CMP-3-deoxy-beta-D-manno-octulosonate + diphosphate. It participates in nucleotide-sugar biosynthesis; CMP-3-deoxy-D-manno-octulosonate biosynthesis; CMP-3-deoxy-D-manno-octulosonate from 3-deoxy-D-manno-octulosonate and CTP: step 1/1. It functions in the pathway bacterial outer membrane biogenesis; lipopolysaccharide biosynthesis. Functionally, activates KDO (a required 8-carbon sugar) for incorporation into bacterial lipopolysaccharide in Gram-negative bacteria. The polypeptide is 3-deoxy-manno-octulosonate cytidylyltransferase (Psychrobacter arcticus (strain DSM 17307 / VKM B-2377 / 273-4)).